Here is a 175-residue protein sequence, read N- to C-terminus: Large ribosomal subunit protein uL10 (175 aa).

This sequence belongs to the universal ribosomal protein uL10 family. As to quaternary structure, part of the ribosomal stalk of the 50S ribosomal subunit. The N-terminus interacts with L11 and the large rRNA to form the base of the stalk. The C-terminus forms an elongated spine to which L12 dimers bind in a sequential fashion forming a multimeric L10(L12)X complex.

Functionally, forms part of the ribosomal stalk, playing a central role in the interaction of the ribosome with GTP-bound translation factors. This Mycobacterium sp. (strain KMS) protein is Large ribosomal subunit protein uL10.